A 716-amino-acid polypeptide reads, in one-letter code: Lamin-like protein (716 aa).

2 stretches are compositionally biased toward basic residues: residues 1 to 10 (MDMSKKKSKR) and 35 to 45 (KKTKTTTKKKA). The disordered stretch occupies residues 1–107 (MDMSKKKSKR…TIQSIPTTPI (107 aa)). Residues 62–107 (ITTTTTSTSTTNNNNITTTSTSSQQSNGTLSSSSSPTIQSIPTTPI) show a composition bias toward low complexity. The stretch at 130–450 (LREKDELSLI…KMRKQMADLK (321 aa)) forms a coiled coil. Residues 132 to 515 (EKDELSLIHN…ELVKGFEKTV (384 aa)) form the IF rod domain. Positions 519–522 (KRKR) match the Nuclear localization signal motif. Residues 519-584 (KRKRSKLQHE…PTGPEQSELF (66 aa)) form a disordered region. Residues 532-545 (AANQDQNGMTIEEQ) show a composition bias toward polar residues. Residues 546 to 564 (SSTSTTTTTSATGSSSSTS) are compositionally biased toward low complexity. The segment covering 565-584 (HLDNIDSSKLPTGPEQSELF) has biased composition (polar residues). The LTD domain maps to 575 to 698 (PTGPEQSELF…EETTTVTLPA (124 aa)). The short motif at 713–716 (CLIM) is the CAAX motif element.

This sequence belongs to the intermediate filament family. In terms of assembly, homodimer. Lamin dimers then assemble into dimeric head-to-tail polymers. Ultimately, two head-to-tail polymers assemble laterally into a protofilament with a uniformly shaped rod of 3.5 nm in diameter.

It is found in the nucleus lamina. The protein localises to the nucleus envelope. Its subcellular location is the nucleus inner membrane. In terms of biological role, lamins are intermediate filament proteins that assemble into a filamentous meshwork, and which constitute the major components of the nuclear lamina, a fibrous layer on the nucleoplasmic side of the inner nuclear membrane. Lamins provide a framework for the nuclear envelope, bridging the nuclear envelope and chromatin, thereby playing an important role in nuclear assembly, chromatin organization, nuclear membrane and telomere dynamics. The structural integrity of the lamina is strictly controlled by the cell cycle, as seen by the disintegration and formation of the nuclear envelope in prophase and telophase, respectively. Helps to maintain integrity of nuclear structures in response to mechanical stress. The polypeptide is Lamin-like protein (Dictyostelium discoideum (Social amoeba)).